The sequence spans 293 residues: ADP-forming sulfoacetate-CoA ligase subunit SauD (293 aa).

CoA contacts are provided by residues 17 to 20, K43, and 96 to 98; these read TGKE and IAD. The active-site Tele-phosphohistidine intermediate is the H251.

Belongs to the succinate/malate CoA ligase alpha subunit family. As to quaternary structure, forms a complex with SauC.

It catalyses the reaction sulfoacetate + ATP + CoA = sulfoacetyl-CoA + ADP + phosphate. Functionally, involved in the degradation of sulfoacetate. Catalyzes the CoA- and ATP-dependent conversion of sulfoacetate to sulfoacetyl-CoA and ADP. Cannot use other sulfonic and carboxylic acids, and shows only residual activity with 3-sulfopropanoate and malonic acid. The chain is ADP-forming sulfoacetate-CoA ligase subunit SauD from Bilophila wadsworthia (strain 3_1_6).